The sequence spans 317 residues: UV DNA damage endonuclease (317 aa).

The protein belongs to the uve1/UvsE family.

Functionally, component in a DNA repair pathway. Removal of UV LIGHT damaged nucleotides. Recognizes pyrimidine dimers and cleave a phosphodiester bond immediately 5' to the lesion. The protein is UV DNA damage endonuclease of Bacillus cereus (strain Q1).